Here is a 783-residue protein sequence, read N- to C-terminus: Cation/H(+) antiporter 2 (783 aa).

12 helical membrane passes run 19-39, 43-63, 81-101, 121-141, 145-165, 186-206, 208-228, 242-262, 300-320, 323-343, 355-375, and 391-411; these read LNTMFIQMACILVFSQLFYLL, CGQAGPVAQILAGIVLSPVLL, YYSFFSFALRTSFMFLIGLEV, FVVSGLLSFASLMLFIPLFGI, YFTFFLVLLVTLSNTASPVVV, ALFIELTNVVLYTIIMAFISG, IILELFLFLLATVALILINMV, YLSKAETLVFFIFLLIIGITI, EFVLPVYFGYIGFRFSIIALT, FYLGIVIIVIVTIAGKFIGVI, YWLFLPTILSVKGHVGLLLLD, and MMVAALVITTLVSGVLASFLL.

The protein belongs to the monovalent cation:proton antiporter 2 (CPA2) transporter (TC 2.A.37) family. CHX (TC 2.A.37.4) subfamily. Specifically expressed in pollen.

It is found in the membrane. Functionally, may operate as a cation/H(+) antiporter. The polypeptide is Cation/H(+) antiporter 2 (CHX2) (Arabidopsis thaliana (Mouse-ear cress)).